Consider the following 200-residue polypeptide: Imidazole glycerol phosphate synthase subunit HisH (200 aa).

A Glutamine amidotransferase type-1 domain is found at 3–200; the sequence is DVALIDAGGA…LRNFLEMSFP (198 aa). C78 (nucleophile) is an active-site residue. Residues H179 and E181 contribute to the active site.

As to quaternary structure, heterodimer of HisH and HisF.

It localises to the cytoplasm. It carries out the reaction 5-[(5-phospho-1-deoxy-D-ribulos-1-ylimino)methylamino]-1-(5-phospho-beta-D-ribosyl)imidazole-4-carboxamide + L-glutamine = D-erythro-1-(imidazol-4-yl)glycerol 3-phosphate + 5-amino-1-(5-phospho-beta-D-ribosyl)imidazole-4-carboxamide + L-glutamate + H(+). The catalysed reaction is L-glutamine + H2O = L-glutamate + NH4(+). It functions in the pathway amino-acid biosynthesis; L-histidine biosynthesis; L-histidine from 5-phospho-alpha-D-ribose 1-diphosphate: step 5/9. IGPS catalyzes the conversion of PRFAR and glutamine to IGP, AICAR and glutamate. The HisH subunit catalyzes the hydrolysis of glutamine to glutamate and ammonia as part of the synthesis of IGP and AICAR. The resulting ammonia molecule is channeled to the active site of HisF. This is Imidazole glycerol phosphate synthase subunit HisH from Xanthomonas euvesicatoria pv. vesicatoria (strain 85-10) (Xanthomonas campestris pv. vesicatoria).